We begin with the raw amino-acid sequence, 921 residues long: Isoleucine--tRNA ligase 1 (921 aa).

The 'HIGH' region motif lies at proline 57–histidine 67. Position 552 (glutamate 552) interacts with L-isoleucyl-5'-AMP. A 'KMSKS' region motif is present at residues lysine 593–serine 597. Lysine 596 serves as a coordination point for ATP. Residues cysteine 888, cysteine 891, cysteine 908, and cysteine 911 each coordinate Zn(2+).

It belongs to the class-I aminoacyl-tRNA synthetase family. IleS type 1 subfamily. As to quaternary structure, monomer. The cofactor is Zn(2+).

The protein resides in the cytoplasm. It carries out the reaction tRNA(Ile) + L-isoleucine + ATP = L-isoleucyl-tRNA(Ile) + AMP + diphosphate. Functionally, catalyzes the attachment of isoleucine to tRNA(Ile). As IleRS can inadvertently accommodate and process structurally similar amino acids such as valine, to avoid such errors it has two additional distinct tRNA(Ile)-dependent editing activities. One activity is designated as 'pretransfer' editing and involves the hydrolysis of activated Val-AMP. The other activity is designated 'posttransfer' editing and involves deacylation of mischarged Val-tRNA(Ile). This chain is Isoleucine--tRNA ligase 1, found in Bacillus cereus (strain ZK / E33L).